A 218-amino-acid polypeptide reads, in one-letter code: Large ribosomal subunit protein uL3 (218 aa).

Q154 carries the N5-methylglutamine modification.

This sequence belongs to the universal ribosomal protein uL3 family. As to quaternary structure, part of the 50S ribosomal subunit. Forms a cluster with proteins L14 and L19. Methylated by PrmB.

Functionally, one of the primary rRNA binding proteins, it binds directly near the 3'-end of the 23S rRNA, where it nucleates assembly of the 50S subunit. This chain is Large ribosomal subunit protein uL3, found in Polynucleobacter asymbioticus (strain DSM 18221 / CIP 109841 / QLW-P1DMWA-1) (Polynucleobacter necessarius subsp. asymbioticus).